The following is a 380-amino-acid chain: Cytochrome b (380 aa).

A run of 4 helical transmembrane segments spans residues 34 to 54 (FGSL…LLAA), 78 to 99 (WLIR…YLHI), 114 to 134 (WNTG…GYVL), and 179 to 199 (FFTL…IHLT). The heme b site is built by His84 and His98. Heme b-binding residues include His183 and His197. Residue His202 participates in a ubiquinone binding. The next 4 helical transmembrane spans lie at 227–247 (LKDI…ALFS), 289–309 (LGGV…PLLH), 321–341 (LSQL…WVGS), and 348–368 (FMII…VLFP).

This sequence belongs to the cytochrome b family. As to quaternary structure, the cytochrome bc1 complex contains 11 subunits: 3 respiratory subunits (MT-CYB, CYC1 and UQCRFS1), 2 core proteins (UQCRC1 and UQCRC2) and 6 low-molecular weight proteins (UQCRH/QCR6, UQCRB/QCR7, UQCRQ/QCR8, UQCR10/QCR9, UQCR11/QCR10 and a cleavage product of UQCRFS1). This cytochrome bc1 complex then forms a dimer. The cofactor is heme b.

Its subcellular location is the mitochondrion inner membrane. In terms of biological role, component of the ubiquinol-cytochrome c reductase complex (complex III or cytochrome b-c1 complex) that is part of the mitochondrial respiratory chain. The b-c1 complex mediates electron transfer from ubiquinol to cytochrome c. Contributes to the generation of a proton gradient across the mitochondrial membrane that is then used for ATP synthesis. The sequence is that of Cytochrome b (MT-CYB) from Anthropoides virgo (Demoiselle crane).